A 70-amino-acid polypeptide reads, in one-letter code: MKKDIHPKYEEITASCSCGNVIKIRSTVGHDLNLDVCSKCHPFFTGKQRDVATGGRVDRFNKRFNIPGSK.

Residue Lys8 is modified to N6-acetyllysine. Positions 16, 18, 37, and 40 each coordinate Zn(2+).

The protein belongs to the bacterial ribosomal protein bL31 family. Type A subfamily. Part of the 50S ribosomal subunit. Zn(2+) serves as cofactor.

Its function is as follows. Binds the 23S rRNA. The protein is Large ribosomal subunit protein bL31 of Shigella flexneri.